The primary structure comprises 428 residues: Flotillin-2a (428 aa).

3 S-palmitoyl cysteine lipidation sites follow: Cys-4, Cys-19, and Cys-20.

This sequence belongs to the band 7/mec-2 family. Flotillin subfamily. Heterooligomer; Heterooligomerizes with ic complex of flotillins 1 and 2. Post-translationally, palmitoylation may be required for the formation of higher order complexes and for neurite outgrowth in cultured neural stem cells.

The protein localises to the membrane. Its subcellular location is the endosome. May play a role in axon growth and regeneration. May be involved in epidermal cell adhesion and epidermal structure and function. The sequence is that of Flotillin-2a (flot2a) from Danio rerio (Zebrafish).